Consider the following 265-residue polypeptide: Small ribosomal subunit protein eS4 (265 aa).

Residues 42-104 form the S4 RNA-binding domain; that stretch reads LPLILIIRNR…TGENYRLLYD (63 aa).

It belongs to the eukaryotic ribosomal protein eS4 family.

It is found in the cytoplasm. The chain is Small ribosomal subunit protein eS4 (RPS4) from Oryza sativa subsp. japonica (Rice).